The chain runs to 412 residues: Glucose-1-phosphate adenylyltransferase (412 aa).

Alpha-D-glucose 1-phosphate is bound by residues Gly-163, 179 to 180, and Ser-197; that span reads EK.

It belongs to the bacterial/plant glucose-1-phosphate adenylyltransferase family. As to quaternary structure, homotetramer.

The enzyme catalyses alpha-D-glucose 1-phosphate + ATP + H(+) = ADP-alpha-D-glucose + diphosphate. The protein operates within glycan biosynthesis; glycogen biosynthesis. Involved in the biosynthesis of ADP-glucose, a building block required for the elongation reactions to produce glycogen. Catalyzes the reaction between ATP and alpha-D-glucose 1-phosphate (G1P) to produce pyrophosphate and ADP-Glc. In Frankia casuarinae (strain DSM 45818 / CECT 9043 / HFP020203 / CcI3), this protein is Glucose-1-phosphate adenylyltransferase.